The primary structure comprises 121 residues: MMQGTCKISSIEKGALKNLYVVKMDCDNDLKIEFDITKELSIFSKDEEVTFIISREKPEYSEKDFCAHGYLFLERQQEDGSFIDEISLYGLIVKILSKNGLINSKLFKMMDHVYYCVKKKA.

This sequence belongs to the archaeal Rpo8 RNA polymerase subunit family. In terms of assembly, part of the 13-subunit RNA polymerase complex. In terms of processing, this subunit is phosphorylated.

It is found in the cytoplasm. The enzyme catalyses RNA(n) + a ribonucleoside 5'-triphosphate = RNA(n+1) + diphosphate. Functionally, DNA-dependent RNA polymerase (RNAP) catalyzes the transcription of DNA into RNA using the four ribonucleoside triphosphates as substrates. This chain is DNA-directed RNA polymerase subunit Rpo8, found in Sulfolobus acidocaldarius (strain ATCC 33909 / DSM 639 / JCM 8929 / NBRC 15157 / NCIMB 11770).